The following is a 1176-amino-acid chain: Nitrite reductase [NAD(P)H] (1176 aa).

The disordered stretch occupies residues 1 to 23 (MANTSLDMASSTSPSPSPESTTT). The segment covering 10 to 23 (SSTSPSPSPESTTT) has biased composition (low complexity). An FAD-binding site is contributed by 26–60 (KRIVVVGLGMVGIAFIEKLIKLDTQRQYEIVVIGE). 183-215 (STGVVVGGGLLGLEAAKALMDLQVFGRVVVIER) contacts NAD(+). Residues Cys-496, Cys-498, Cys-531, and Cys-534 each contribute to the [2Fe-2S] cluster site. Positions 717, 723, 757, and 761 each coordinate [4Fe-4S] cluster. Siroheme is bound at residue Cys-761. The region spanning 942-1094 (SYFQGADDLP…VEERDDGMVY (153 aa)) is the Rieske; atypical domain. The [2Fe-2S] cluster site is built by Cys-981 and His-983. 2 stretches are compositionally biased toward low complexity: residues 998–1008 (PSPSSCSSSAL) and 1030–1049 (PTSS…TNPS). The interval 998–1051 (PSPSSCSSSALPPSPPSTPPRSSSPVTSPPQSPTSSATPATTASSSCTTNPSGP) is disordered. [2Fe-2S] cluster-binding residues include Cys-1058 and His-1061. Positions 1124–1139 (LRELDELNKSKGVEGK) are enriched in basic and acidic residues. Residues 1124–1157 (LRELDELNKSKGVEGKKGRRGRKPGASEAGKEVG) are disordered.

It belongs to the nitrite and sulfite reductase 4Fe-4S domain family. Homodimer. It depends on siroheme as a cofactor. [4Fe-4S] cluster is required as a cofactor. The cofactor is FAD. Requires [2Fe-2S] cluster as cofactor.

It catalyses the reaction NH4(+) + 3 NADP(+) + 2 H2O = nitrite + 3 NADPH + 5 H(+). The catalysed reaction is NH4(+) + 3 NAD(+) + 2 H2O = nitrite + 3 NADH + 5 H(+). It functions in the pathway nitrogen metabolism; nitrate reduction (assimilation). The protein is Nitrite reductase [NAD(P)H] (nit-6) of Neurospora crassa (strain ATCC 24698 / 74-OR23-1A / CBS 708.71 / DSM 1257 / FGSC 987).